An 87-amino-acid chain; its full sequence is Putative phytosulfokines 4 (87 aa).

The signal sequence occupies residues 1–23 (MANLSTLITIALLLCATMLTCSA). The propeptide occupies 24-77 (RPEPAYFASFTTSPADTLSLEMIESKLHEVAGESCDKEDDEDCLVRRTLTAHLD). Sulfotyrosine occurs at positions 78 and 80. The propeptide occupies 83-87 (KNNHH).

Belongs to the phytosulfokine family. Sulfation is important for activity and for the binding to a putative membrane receptor.

It is found in the secreted. Its function is as follows. Promotes plant cell differentiation, organogenesis and somatic embryogenesis as well as cell proliferation. In Arabidopsis thaliana (Mouse-ear cress), this protein is Putative phytosulfokines 4 (PSK4).